The sequence spans 436 residues: Probable ABC transporter binding protein NosD (436 aa).

The signal sequence occupies residues 1–27 (MFKAQATFSRYSAAVSLLLLFSGAAQA). PbH1 repeat units lie at residues 85 to 113 (APDV…FILP), 115 to 136 (AERA…FVDG), 137 to 166 (TRDV…HLFA), 167 to 188 (VSGA…YIDT), 189 to 210 (SNGN…HYMF), 233 to 255 (SRKL…LMNY), 293 to 314 (SLFN…HLTA), and 316 to 354 (SEDN…YWSD).

It belongs to the NosD family. The complex may be composed of an ATP-binding protein (NosF), a transmembrane protein (NosY) and a solute-binding protein (NosD).

The protein localises to the periplasm. Required for the assembly of the copper chromophores of nitrous oxide reductase. Could be part of the ABC transporter complex NosDFY. The chain is Probable ABC transporter binding protein NosD from Stutzerimonas stutzeri (Pseudomonas stutzeri).